Reading from the N-terminus, the 914-residue chain is Translation initiation factor IF-2 (914 aa).

2 disordered regions span residues 246–271 and 293–313; these read EDGE…KKKG and SGMD…QRRM. The span at 249–266 shows a compositional bias: basic and acidic residues; sequence EAAKKKAAKPDGGEDVGV. The tr-type G domain occupies 411–581; the sequence is TRPPVVTIMG…LAEAEIRELK (171 aa). A G1 region spans residues 420 to 427; the sequence is GHVDHGKT. A GTP-binding site is contributed by 420-427; that stretch reads GHVDHGKT. Positions 445-449 are G2; that stretch reads GITQH. Residues 467–470 are G3; it reads DTPG. GTP contacts are provided by residues 467–471 and 521–524; these read DTPGH and NKID. A G4 region spans residues 521–524; it reads NKID. Positions 557 to 559 are G5; sequence SAK.

This sequence belongs to the TRAFAC class translation factor GTPase superfamily. Classic translation factor GTPase family. IF-2 subfamily.

Its subcellular location is the cytoplasm. One of the essential components for the initiation of protein synthesis. Protects formylmethionyl-tRNA from spontaneous hydrolysis and promotes its binding to the 30S ribosomal subunits. Also involved in the hydrolysis of GTP during the formation of the 70S ribosomal complex. This chain is Translation initiation factor IF-2, found in Chlorobaculum tepidum (strain ATCC 49652 / DSM 12025 / NBRC 103806 / TLS) (Chlorobium tepidum).